The sequence spans 289 residues: Palmitoyl-protein thioesterase 3 (289 aa).

An N-terminal signal peptide occupies residues 1–20 (MRILSSLILLIALAIALVSA). Residue Ser-97 is part of the active site. N-linked (GlcNAc...) asparagine glycans are attached at residues Asn-189 and Asn-195. Residues Asp-210 and His-266 contribute to the active site. Asn-281 is a glycosylation site (N-linked (GlcNAc...) asparagine).

It belongs to the palmitoyl-protein thioesterase family.

It is found in the lysosome. It carries out the reaction S-hexadecanoyl-L-cysteinyl-[protein] + H2O = L-cysteinyl-[protein] + hexadecanoate + H(+). Functionally, removes thioester-linked fatty acyl groups such as palmitate from modified cysteine residues in proteins or peptides during lysosomal degradation. The chain is Palmitoyl-protein thioesterase 3 (ppt3) from Dictyostelium discoideum (Social amoeba).